The sequence spans 214 residues: Soluble inorganic pyrophosphatase (214 aa).

The interval 1-20 (MSEEDKTAASAEQPKRAPKL) is disordered. Residues Lys-64, Arg-78, and Tyr-90 each coordinate substrate. Positions 100, 105, and 137 each coordinate Mg(2+). Tyr-174 contributes to the substrate binding site.

The protein belongs to the PPase family. The cofactor is Mg(2+).

It localises to the cytoplasm. It carries out the reaction diphosphate + H2O = 2 phosphate + H(+). The polypeptide is Soluble inorganic pyrophosphatase (IPP) (Zea mays (Maize)).